A 400-amino-acid chain; its full sequence is Leukosialin (400 aa).

An N-terminal signal peptide occupies residues 1–19 (MATLLLLLGVLVVSPDALG). The Extracellular segment spans residues 20–253 (STTAVQTPTS…PFRNPDENSR (234 aa)). Residues threonine 21, threonine 22, threonine 26, and threonine 28 are each glycosylated (O-linked (GalNAc...) threonine). Polar residues-rich tracts occupy residues 21–51 (TTAV…SITS) and 58–112 (TGDQ…TPHA). Positions 21–224 (TTAVQTPTSG…SSGASGPQVS (204 aa)) are disordered. Serine 29 and serine 35 each carry an O-linked (GalNAc...) serine glycan. Threonine 36 carries an O-linked (GalNAc...) threonine glycan. O-linked (GalNAc...) serine glycans are attached at residues serine 37, serine 41, and serine 42. Residues threonine 46 and threonine 47 are each glycosylated (O-linked (GalNAc...) threonine). Residue serine 48 is glycosylated (O-linked (GalNAc...) serine). O-linked (GalNAc...) threonine glycosylation is found at threonine 50, threonine 58, and threonine 69. O-linked (GalNAc...) serine glycans are attached at residues serine 99 and serine 103. Threonine 109 and threonine 113 each carry an O-linked (GalNAc...) threonine glycan. A glycan (O-linked (GalNAc...) serine) is linked at serine 114. Composition is skewed to polar residues over residues 121 to 164 (TANS…SRGT) and 172 to 182 (ATVSLETSKGT). 4 O-linked (GalNAc...) threonine glycosylation sites follow: threonine 136, threonine 137, threonine 173, and threonine 178. Positions 196–211 (TSTGTTGPPVTMTTGS) are enriched in low complexity. A compositionally biased stretch (polar residues) spans 212–224 (LEPSSGASGPQVS). Asparagine 239 carries N-linked (GlcNAc...) asparagine glycosylation. Residues 254 to 276 (GMLPVAVLVALLAVIVLVALLLL) traverse the membrane as a helical segment. The Cytoplasmic segment spans residues 277-400 (WRRRQKRRTG…EPEGGDGAAP (124 aa)). The interval 278-308 (RRRQKRRTGALVLSRGGKRNGVVDAWAGPAQ) is required for interaction with EZR, MSN and RDX and for co-localization to microvilli. The short motif at 282–296 (KRRTGALVLSRGGKR) is the Nuclear localization signal element. Serine 291 is modified (phosphoserine). The span at 320–332 (GGSGGDKGSGFPD) shows a compositional bias: gly residues. The disordered stretch occupies residues 320–400 (GGSGGDKGSG…EPEGGDGAAP (81 aa)). A Phosphoserine modification is found at serine 336. Threonine 341 bears the Phosphothreonine mark. Serine 351 carries the phosphoserine modification. Serine 355 is modified (phosphoserine; by PKC/PRKCQ). Phosphoserine occurs at positions 368 and 379.

As to quaternary structure, interacts with SIGLEC1. In terms of assembly, monomer. Interacts with CTNNB1. Interacts with RDX (via FERM domain), EZR and MSN. In terms of processing, glycosylated; has a high content of sialic acid and O-linked carbohydrate structures. Post-translationally, phosphorylation at Ser-355 is regulated by chemokines, requires its association with ERM proteins (EZR, RDX and MSN) and is essential for its function in the regulation of T-cell trafficking to lymph nodes. Has a high content of sialic acid and O-linked carbohydrate structures. In terms of processing, cleavage by CTSG releases its extracellular domain and triggers its intramembrane proteolysis by gamma-secretase releasing the CD43 cytoplasmic tail chain (CD43-ct) which translocates to the nucleus. Post-translationally, sumoylated. As to expression, cell surface of thymocytes, T-lymphocytes, neutrophils, plasma cells and myelomas.

The protein resides in the membrane. It localises to the cell projection. It is found in the microvillus. Its subcellular location is the uropodium. The protein localises to the nucleus. The protein resides in the PML body. In terms of biological role, predominant cell surface sialoprotein of leukocytes which regulates multiple T-cell functions, including T-cell activation, proliferation, differentiation, trafficking and migration. Positively regulates T-cell trafficking to lymph-nodes via its association with ERM proteins (EZR, RDX and MSN). Negatively regulates Th2 cell differentiation and predisposes the differentiation of T-cells towards a Th1 lineage commitment. Promotes the expression of IFN-gamma by T-cells during T-cell receptor (TCR) activation of naive cells and induces the expression of IFN-gamma by CD4(+) T-cells and to a lesser extent by CD8(+) T-cells. Plays a role in preparing T-cells for cytokine sensing and differentiation into effector cells by inducing the expression of cytokine receptors IFNGR and IL4R, promoting IFNGR and IL4R signaling and by mediating the clustering of IFNGR with TCR. Acts as a major E-selectin ligand responsible for Th17 cell rolling on activated vasculature and recruitment during inflammation. Mediates Th17 cells, but not Th1 cells, adhesion to E-selectin. Acts as a T-cell counter-receptor for SIGLEC1. Protects cells from apoptotic signals, promoting cell survival. In Homo sapiens (Human), this protein is Leukosialin (SPN).